Consider the following 251-residue polypeptide: Octanoyltransferase (251 aa).

The 182-residue stretch at 56–237 (ADTGDEIWVV…RLIANLDGES (182 aa)) folds into the BPL/LPL catalytic domain. Substrate is bound by residues 96 to 103 (RGGQITYH), 168 to 170 (ALG), and 181 to 183 (GLS). The active-site Acyl-thioester intermediate is Cys-199.

Belongs to the LipB family.

It localises to the cytoplasm. The catalysed reaction is octanoyl-[ACP] + L-lysyl-[protein] = N(6)-octanoyl-L-lysyl-[protein] + holo-[ACP] + H(+). It functions in the pathway protein modification; protein lipoylation via endogenous pathway; protein N(6)-(lipoyl)lysine from octanoyl-[acyl-carrier-protein]: step 1/2. Functionally, catalyzes the transfer of endogenously produced octanoic acid from octanoyl-acyl-carrier-protein onto the lipoyl domains of lipoate-dependent enzymes. Lipoyl-ACP can also act as a substrate although octanoyl-ACP is likely to be the physiological substrate. The sequence is that of Octanoyltransferase from Burkholderia ambifaria (strain ATCC BAA-244 / DSM 16087 / CCUG 44356 / LMG 19182 / AMMD) (Burkholderia cepacia (strain AMMD)).